The primary structure comprises 363 residues: Flagellar P-ring protein (363 aa).

A signal peptide spans 1 to 18 (MWKKVLIAIVFITSFSFA).

This sequence belongs to the FlgI family. The basal body constitutes a major portion of the flagellar organelle and consists of four rings (L,P,S, and M) mounted on a central rod.

The protein localises to the periplasm. The protein resides in the bacterial flagellum basal body. Assembles around the rod to form the L-ring and probably protects the motor/basal body from shearing forces during rotation. The protein is Flagellar P-ring protein of Sulfurihydrogenibium sp. (strain YO3AOP1).